Here is a 601-residue protein sequence, read N- to C-terminus: N-acetyltransferase ESCO2 (601 aa).

4 positions are modified to phosphoserine: Ser29, Ser75, Ser223, and Ser244. Residues 222–243 form a disordered region; the sequence is SSLENEPSLGRTQKSKSEVIED. Positions 282 to 305 are enriched in basic and acidic residues; that stretch reads KEKLIKDSSDDRVSSKEHKVDKNE. Residues 282 to 315 are disordered; the sequence is KEKLIKDSSDDRVSSKEHKVDKNEAFSSEDSLGE. Polar residues predominate over residues 306–315; the sequence is AFSSEDSLGE. Ser312 carries the phosphoserine modification. The segment at 387-411 adopts a CCHH-type zinc-finger fold; it reads TVCKSCGMIYTASNPEDEMQHVQHH. At Ser512 the chain carries Phosphoserine.

This sequence belongs to the acetyltransferase family. ECO subfamily. In terms of tissue distribution, widely expressed in fetal tissues. In adult, it is expressed in thymus, placenta and small intestine.

The protein resides in the nucleus. It is found in the chromosome. The enzyme catalyses L-lysyl-[protein] + acetyl-CoA = N(6)-acetyl-L-lysyl-[protein] + CoA + H(+). In terms of biological role, acetyltransferase required for the establishment of sister chromatid cohesion. Couples the processes of cohesion and DNA replication to ensure that only sister chromatids become paired together. In contrast to the structural cohesins, the deposition and establishment factors are required only during the S phase. Acetylates the cohesin component SMC3. This Homo sapiens (Human) protein is N-acetyltransferase ESCO2.